The primary structure comprises 162 residues: 2-C-methyl-D-erythritol 2,4-cyclodiphosphate synthase (162 aa).

Residues D10 and H12 each contribute to the a divalent metal cation site. Residues 10 to 12 and 36 to 37 contribute to the 4-CDP-2-C-methyl-D-erythritol 2-phosphate site; these read DVH and HS. H44 is an a divalent metal cation binding site. 4-CDP-2-C-methyl-D-erythritol 2-phosphate is bound by residues 58–60, 63–67, and R144; these read DIG and FPDTD.

Belongs to the IspF family. Homotrimer. The cofactor is a divalent metal cation.

It carries out the reaction 4-CDP-2-C-methyl-D-erythritol 2-phosphate = 2-C-methyl-D-erythritol 2,4-cyclic diphosphate + CMP. The protein operates within isoprenoid biosynthesis; isopentenyl diphosphate biosynthesis via DXP pathway; isopentenyl diphosphate from 1-deoxy-D-xylulose 5-phosphate: step 4/6. Involved in the biosynthesis of isopentenyl diphosphate (IPP) and dimethylallyl diphosphate (DMAPP), two major building blocks of isoprenoid compounds. Catalyzes the conversion of 4-diphosphocytidyl-2-C-methyl-D-erythritol 2-phosphate (CDP-ME2P) to 2-C-methyl-D-erythritol 2,4-cyclodiphosphate (ME-CPP) with a corresponding release of cytidine 5-monophosphate (CMP). This Laribacter hongkongensis (strain HLHK9) protein is 2-C-methyl-D-erythritol 2,4-cyclodiphosphate synthase.